Here is a 649-residue protein sequence, read N- to C-terminus: 70 kDa protein (649 aa).

4 disordered regions span residues 28-80 (LRRG…DFSP), 257-286 (ALSL…AASD), 311-359 (TATS…SKQQ), and 458-550 (QSAE…PSSL). A compositionally biased stretch (polar residues) spans 268 to 279 (KSTSPCNNSQLP). Residues 330–349 (RLQRSLHLHSRSPHSSHFRP) show a composition bias toward basic residues. Residues 504-515 (DVSNSETKNCPS) are compositionally biased toward polar residues. Low complexity-rich tracts occupy residues 524–533 (PNHLHPLLPG) and 540–550 (PRQLSPSPSSL).

It belongs to the tymoviridae protein p69 family.

The chain is 70 kDa protein from Solanum lycopersicum (Tomato).